Here is a 359-residue protein sequence, read N- to C-terminus: DNA-directed RNA polymerase subunit alpha (359 aa).

The tract at residues 1 to 226 (MLISQRPSLA…ELFGLARELN (226 aa)) is alpha N-terminal domain (alpha-NTD). The segment at 241–359 (ADTIAAYAMP…GQDYAETEQL (119 aa)) is alpha C-terminal domain (alpha-CTD). Residues 315–359 (FDPSAAAAEYPSEGWASETETVGGLGRVEDNGYDDGQDYAETEQL) form a disordered region. Acidic residues predominate over residues 345 to 359 (NGYDDGQDYAETEQL).

Belongs to the RNA polymerase alpha chain family. As to quaternary structure, homodimer. The RNAP catalytic core consists of 2 alpha, 1 beta, 1 beta' and 1 omega subunit. When a sigma factor is associated with the core the holoenzyme is formed, which can initiate transcription.

The catalysed reaction is RNA(n) + a ribonucleoside 5'-triphosphate = RNA(n+1) + diphosphate. Its function is as follows. DNA-dependent RNA polymerase catalyzes the transcription of DNA into RNA using the four ribonucleoside triphosphates as substrates. The chain is DNA-directed RNA polymerase subunit alpha from Saccharopolyspora erythraea (strain ATCC 11635 / DSM 40517 / JCM 4748 / NBRC 13426 / NCIMB 8594 / NRRL 2338).